The chain runs to 584 residues: 2-succinyl-5-enolpyruvyl-6-hydroxy-3-cyclohexene-1-carboxylate synthase (584 aa).

Belongs to the TPP enzyme family. MenD subfamily. As to quaternary structure, homodimer. Mg(2+) is required as a cofactor. Requires Mn(2+) as cofactor. The cofactor is thiamine diphosphate.

The catalysed reaction is isochorismate + 2-oxoglutarate + H(+) = 5-enolpyruvoyl-6-hydroxy-2-succinyl-cyclohex-3-ene-1-carboxylate + CO2. The protein operates within quinol/quinone metabolism; 1,4-dihydroxy-2-naphthoate biosynthesis; 1,4-dihydroxy-2-naphthoate from chorismate: step 2/7. It participates in quinol/quinone metabolism; menaquinone biosynthesis. In terms of biological role, catalyzes the thiamine diphosphate-dependent decarboxylation of 2-oxoglutarate and the subsequent addition of the resulting succinic semialdehyde-thiamine pyrophosphate anion to isochorismate to yield 2-succinyl-5-enolpyruvyl-6-hydroxy-3-cyclohexene-1-carboxylate (SEPHCHC). In Bacillus cereus (strain ATCC 14579 / DSM 31 / CCUG 7414 / JCM 2152 / NBRC 15305 / NCIMB 9373 / NCTC 2599 / NRRL B-3711), this protein is 2-succinyl-5-enolpyruvyl-6-hydroxy-3-cyclohexene-1-carboxylate synthase.